The primary structure comprises 385 residues: Heat-inducible transcription repressor HrcA (385 aa).

Belongs to the HrcA family.

Negative regulator of class I heat shock genes (grpE-dnaK-dnaJ and groELS operons). Prevents heat-shock induction of these operons. This chain is Heat-inducible transcription repressor HrcA, found in Protochlamydia amoebophila (strain UWE25).